A 408-amino-acid polypeptide reads, in one-letter code: Argininosuccinate synthase (408 aa).

Residues 10–18 (AYSGGLDTS) and Ala37 contribute to the ATP site. L-citrulline is bound by residues Tyr90 and Ser95. Residue Gly120 participates in ATP binding. L-aspartate is bound by residues Thr122, Asn126, and Asp127. Residue Asn126 coordinates L-citrulline. Residues Arg130, Ser181, Ser190, Glu266, and Tyr278 each coordinate L-citrulline.

This sequence belongs to the argininosuccinate synthase family. Type 1 subfamily. Homotetramer.

The protein resides in the cytoplasm. The catalysed reaction is L-citrulline + L-aspartate + ATP = 2-(N(omega)-L-arginino)succinate + AMP + diphosphate + H(+). The protein operates within amino-acid biosynthesis; L-arginine biosynthesis; L-arginine from L-ornithine and carbamoyl phosphate: step 2/3. The protein is Argininosuccinate synthase of Cereibacter sphaeroides (strain ATCC 17029 / ATH 2.4.9) (Rhodobacter sphaeroides).